The following is a 330-amino-acid chain: Olfactory receptor 5T9 (330 aa).

Topologically, residues 1-37 (MSIHSPGYTVRRIPVNNVTDTTMFILTGFTDDADLQV) are extracellular. The N-linked (GlcNAc...) asparagine glycan is linked to Asn17. The helical transmembrane segment at 38-58 (LLFLLFFVIYLFTLIGNLGLV) threads the bilayer. The Cytoplasmic segment spans residues 59–66 (LLVIGDSR). The chain crosses the membrane as a helical span at residues 67–87 (LHNPMYYFLSVLSFLDACYST). The Extracellular segment spans residues 88–111 (VVTPKMLVNFISNDKSISYPGCVT). Cys109 and Cys201 are oxidised to a cystine. The chain crosses the membrane as a helical span at residues 112 to 132 (EMFLFVTFGTTECFLLAAMAY). Topologically, residues 133–145 (DRFVAIYNPLLYA) are cytoplasmic. The chain crosses the membrane as a helical span at residues 146–166 (VKMSPRVYIPLIIACYSGGIM). Over 167-208 (HATIHTVATFSLSFCASNEIRHVFCDIPPLLAISCSNTNINQ) the chain is Extracellular. The chain crosses the membrane as a helical span at residues 209-229 (LLLFYCVGSIEIITILIVLVS). Topologically, residues 230–249 (YSFILFAILKMNSAEGRRKI) are cytoplasmic. A helical transmembrane segment spans residues 250–270 (FSTCGSHLTGVSIYHGTILFM). Over 271–283 (YVRPSSNYALEHD) the chain is Extracellular. A helical membrane pass occupies residues 284 to 304 (MIVSTFYTIVIPMLNPIIYSL). At 305-330 (RNKDVKEAMKKIFERNFFMNKVHFKL) the chain is on the cytoplasmic side.

Belongs to the G-protein coupled receptor 1 family.

The protein localises to the cell membrane. In terms of biological role, potential odorant receptor. This chain is Olfactory receptor 5T9, found in Mus musculus (Mouse).